Consider the following 82-residue polypeptide: MKSSTTSMQLIPTLFFLTILLASPEMVEGQQMCEAKSLDWKGMCLKWRNCRQVCISEGFTDGRCKGFTRKCICSKPCFVLPN.

A signal peptide spans 1–29; it reads MKSSTTSMQLIPTLFFLTILLASPEMVEG. The residue at position 30 (glutamine 30) is a Pyrrolidone carboxylic acid. Disulfide bonds link cysteine 33–cysteine 77, cysteine 44–cysteine 64, cysteine 50–cysteine 71, and cysteine 54–cysteine 73.

Belongs to the DEFL family. Expressed in stems, roots, rosette leaves and flower buds.

The protein localises to the secreted. This chain is Defensin-like protein 7 (LCR75), found in Arabidopsis thaliana (Mouse-ear cress).